A 210-amino-acid chain; its full sequence is Na(+)-translocating NADH-quinone reductase subunit D (210 aa).

Helical transmembrane passes span 42-62 (FVMT…VSLI), 72-92 (IIVQ…VLKA), 103-123 (VFVG…AFAM), 131-151 (LIDG…VGFF), and 178-198 (NGLM…IWVI).

This sequence belongs to the NqrDE/RnfAE family. In terms of assembly, composed of six subunits; NqrA, NqrB, NqrC, NqrD, NqrE and NqrF.

Its subcellular location is the cell inner membrane. It catalyses the reaction a ubiquinone + n Na(+)(in) + NADH + H(+) = a ubiquinol + n Na(+)(out) + NAD(+). With respect to regulation, this reaction is tightly coupled to the Na(+) pumping activity and specifically requires Na(+) for activity. Inhibited by korormicin and 2-N-heptyl-4-hydroxyquinoline N-oxide (HQNO). Its function is as follows. NQR complex catalyzes the reduction of ubiquinone-1 to ubiquinol by two successive reactions, coupled with the transport of Na(+) ions from the cytoplasm to the periplasm. NqrA to NqrE are probably involved in the second step, the conversion of ubisemiquinone to ubiquinol. The polypeptide is Na(+)-translocating NADH-quinone reductase subunit D (Vibrio alginolyticus).